The following is a 713-amino-acid chain: Phosphoribosylformylglycinamidine synthase subunit PurL (713 aa).

Residue histidine 34 is part of the active site. ATP contacts are provided by tyrosine 37 and arginine 73. Residue glutamate 75 participates in Mg(2+) binding. Residues 76–79 (SHNH) and arginine 98 contribute to the substrate site. Histidine 77 serves as the catalytic Proton acceptor. Aspartate 99 contacts Mg(2+). Glutamine 221 lines the substrate pocket. A Mg(2+)-binding site is contributed by aspartate 249. Residue 292-294 (ESQ) participates in substrate binding. ATP contacts are provided by aspartate 474 and glycine 511. Residue serine 514 participates in substrate binding.

This sequence belongs to the FGAMS family. In terms of assembly, monomer. Part of the FGAM synthase complex composed of 1 PurL, 1 PurQ and 2 PurS subunits.

It localises to the cytoplasm. The enzyme catalyses N(2)-formyl-N(1)-(5-phospho-beta-D-ribosyl)glycinamide + L-glutamine + ATP + H2O = 2-formamido-N(1)-(5-O-phospho-beta-D-ribosyl)acetamidine + L-glutamate + ADP + phosphate + H(+). It participates in purine metabolism; IMP biosynthesis via de novo pathway; 5-amino-1-(5-phospho-D-ribosyl)imidazole from N(2)-formyl-N(1)-(5-phospho-D-ribosyl)glycinamide: step 1/2. In terms of biological role, part of the phosphoribosylformylglycinamidine synthase complex involved in the purines biosynthetic pathway. Catalyzes the ATP-dependent conversion of formylglycinamide ribonucleotide (FGAR) and glutamine to yield formylglycinamidine ribonucleotide (FGAM) and glutamate. The FGAM synthase complex is composed of three subunits. PurQ produces an ammonia molecule by converting glutamine to glutamate. PurL transfers the ammonia molecule to FGAR to form FGAM in an ATP-dependent manner. PurS interacts with PurQ and PurL and is thought to assist in the transfer of the ammonia molecule from PurQ to PurL. The polypeptide is Phosphoribosylformylglycinamidine synthase subunit PurL (Ignicoccus hospitalis (strain KIN4/I / DSM 18386 / JCM 14125)).